A 685-amino-acid polypeptide reads, in one-letter code: Diphthine--ammonia ligase (685 aa).

In the C-terminal section; belongs to the RutC family. The protein in the N-terminal section; belongs to the Diphthine--ammonia ligase family. As to quaternary structure, interacts with elongation factor 2 (eEF-2; EFT1 or EFT2).

The protein localises to the cytoplasm. The catalysed reaction is diphthine-[translation elongation factor 2] + NH4(+) + ATP = diphthamide-[translation elongation factor 2] + AMP + diphosphate + H(+). The protein operates within protein modification; peptidyl-diphthamide biosynthesis. Amidase that catalyzes the last step of diphthamide biosynthesis using ammonium and ATP. Diphthamide biosynthesis consists in the conversion of an L-histidine residue in the translation elongation factor eEF-2 (EFT1 or EFT2) to diphthamide. The polypeptide is Diphthine--ammonia ligase (DPH6) (Saccharomyces cerevisiae (strain ATCC 204508 / S288c) (Baker's yeast)).